Consider the following 579-residue polypeptide: Altered inheritance of mitochondria protein 9, mitochondrial (579 aa).

The transit peptide at 1–36 (MQSWNSQSFLSSHFTMLRYACKRAVPRLNAASGLRF) directs the protein to the mitochondrion.

Belongs to the AIM9 family.

The protein resides in the mitochondrion. The chain is Altered inheritance of mitochondria protein 9, mitochondrial (AIM9) from Yarrowia lipolytica (strain CLIB 122 / E 150) (Yeast).